A 349-amino-acid chain; its full sequence is Putative F-box/LRR-repeat protein At3g16555 (349 aa).

In terms of domain architecture, F-box spans 1-48 (MVLLPWELEEDILSRLPPRSLVQFRSVCKRWNALFDVKSFNKDQFARA). The LRR repeat unit spans residues 267 to 290 (VVWISLLTLPPNNLPNLFIVCYGI).

The protein is Putative F-box/LRR-repeat protein At3g16555 of Arabidopsis thaliana (Mouse-ear cress).